The chain runs to 587 residues: Estrogen receptor (587 aa).

Positions 1-176 (MTLHTKTSGV…SMESTKETRY (176 aa)) are modulating (transactivation AF-1). NR C4-type zinc fingers lie at residues 177–197 (CAVC…CEGC) and 213–237 (CPAT…LRKC). A DNA-binding region (nuclear receptor) is located at residues 177–242 (CAVCNDYASG…RLRKCYEVGM (66 aa)). The segment at 243-302 (MKGGIRKDRRGGRVMKQKRQREEQDSRNGEASSTELRAPTLWASPLVVKHNKKNSPALSL) is hinge. Residues 248–277 (RKDRRGGRVMKQKRQREEQDSRNGEASSTE) are disordered. The segment covering 249-261 (KDRRGGRVMKQKR) has biased composition (basic residues). One can recognise an NR LBD domain in the interval 303 to 539 (TAEQMVSALL…DLLLEMLDAH (237 aa)). The segment at 303–587 (TAEQMVSALL…KEEENMQNTL (285 aa)) is transactivation AF-2.

The protein belongs to the nuclear hormone receptor family. NR3 subfamily. As to quaternary structure, binds DNA as a homodimer. Can form a heterodimer with ER-beta.

It localises to the nucleus. The steroid hormones and their receptors are involved in the regulation of eukaryotic gene expression and affect cellular proliferation and differentiation in target tissues. This is Estrogen receptor (ESR1) from Taeniopygia guttata (Zebra finch).